The chain runs to 282 residues: Para-Rep C2 (282 aa).

A CRESS-DNA virus Rep endonuclease domain is found at 1-99 (MASKRWCFTL…ETLIAEIGAP (99 aa)). The short motif at 7-10 (CFTL) is the RCR-1 element. 2 residues coordinate a divalent metal cation: glutamate 38 and histidine 47. Positions 47–49 (HLQ) match the RCR-2 motif. The Nuclear localization signal motif lies at 56–77 (KLIRLGGLKKKFGSIAHWEIAK). Tyrosine 86 (for DNA cleavage activity) is an active-site residue. The short motif at 86-89 (YCTK) is the RCR-3 element. The Nuclear localization signal signature appears at 99 to 105 (PVKKGSN). 174–182 (GPDGGEGKS) lines the ATP pocket.

The protein belongs to the nanoviridea/circoviridae replication-associated protein family. In terms of assembly, homooligomer (Potential). Rep binds to repeated DNA motifs (iterons). Mg(2+) is required as a cofactor. Mn(2+) serves as cofactor.

The protein localises to the host nucleus. It catalyses the reaction ATP + H2O = ADP + phosphate + H(+). Initiates and terminates the replication only of its own subviral DNA molecule. The closed circular ssDNA genome is first converted to a superhelical dsDNA. Rep binds a specific hairpin at the genome origin of replication. Introduces an endonucleolytic nick within the intergenic region of the genome, thereby initiating the rolling circle replication (RCR). Following cleavage, binds covalently to the 5'-phosphate of DNA as a tyrosyl ester. The cleavage gives rise to a free 3'-OH that serves as a primer for the cellular DNA polymerase. The polymerase synthesizes the (+) strand DNA by rolling circle mechanism. After one round of replication, a Rep-catalyzed nucleotidyl transfer reaction releases a circular single-stranded virus genome, thereby terminating the replication. Displays origin-specific DNA cleavage, nucleotidyl transferase, ATPase and helicase activities. The protein is Para-Rep C2 (C2) of Milk vetch dwarf C2 alphasatellite (MVDC2A).